Consider the following 103-residue polypeptide: Acylphosphatase-2 (103 aa).

N-acetylserine is present on Ser-2. The Acylphosphatase-like domain maps to 13–103 (SVDYEVFGRV…LDFSGFSTRY (91 aa)). Cys-26 is modified (S-glutathionyl cysteine; alternate). Catalysis depends on residues Arg-28 and Asn-46.

Belongs to the acylphosphatase family. In terms of assembly, monomer (TU1) or homodimer (TU3) in absence of reducing factors; disulfide linked.

It catalyses the reaction an acyl phosphate + H2O = a carboxylate + phosphate + H(+). Functionally, its physiological role is not yet clear. The protein is Acylphosphatase-2 (ACYP2) of Meleagris gallopavo (Wild turkey).